A 470-amino-acid polypeptide reads, in one-letter code: Transcriptional activator PmfR (470 aa).

As to quaternary structure, forms oligomers in solution, probably homotetramers.

It functions in the pathway alkaloid degradation; nicotine degradation [regulation]. In terms of biological role, transcriptional regulator involved in the activation of the purU-mabO-folD-nepA-nepB and mao-ORF55-nbr operons implicated in the nicotine catabolic pathway. The sequence GTTT-14 bp-AAAC seems to be the core binding site of the regulator upstream of the -35 promoter region of the operon. This is Transcriptional activator PmfR (pmfR) from Paenarthrobacter nicotinovorans (Arthrobacter nicotinovorans).